A 728-amino-acid chain; its full sequence is 1,4-alpha-glucan branching enzyme GlgB (728 aa).

The active-site Nucleophile is the Asp405. The active-site Proton donor is the Glu458.

It belongs to the glycosyl hydrolase 13 family. GlgB subfamily. As to quaternary structure, monomer.

It carries out the reaction Transfers a segment of a (1-&gt;4)-alpha-D-glucan chain to a primary hydroxy group in a similar glucan chain.. It functions in the pathway glycan biosynthesis; glycogen biosynthesis. Functionally, catalyzes the formation of the alpha-1,6-glucosidic linkages in glycogen by scission of a 1,4-alpha-linked oligosaccharide from growing alpha-1,4-glucan chains and the subsequent attachment of the oligosaccharide to the alpha-1,6 position. In Salmonella paratyphi B (strain ATCC BAA-1250 / SPB7), this protein is 1,4-alpha-glucan branching enzyme GlgB.